We begin with the raw amino-acid sequence, 432 residues long: Glutamate-1-semialdehyde 2,1-aminomutase 1 (432 aa).

Lys268 is modified (N6-(pyridoxal phosphate)lysine).

It belongs to the class-III pyridoxal-phosphate-dependent aminotransferase family. HemL subfamily. As to quaternary structure, homodimer. Pyridoxal 5'-phosphate is required as a cofactor.

The protein resides in the cytoplasm. The enzyme catalyses (S)-4-amino-5-oxopentanoate = 5-aminolevulinate. It functions in the pathway porphyrin-containing compound metabolism; protoporphyrin-IX biosynthesis; 5-aminolevulinate from L-glutamyl-tRNA(Glu): step 2/2. This chain is Glutamate-1-semialdehyde 2,1-aminomutase 1, found in Bacillus cereus (strain ZK / E33L).